Here is a 36-residue protein sequence, read N- to C-terminus: Photosystem II reaction center protein Psb30 (36 aa).

The chain crosses the membrane as a helical span at residues 8–28 (IIAQLTVVTLTLLAGPVIVFL).

The protein belongs to the Psb30/Ycf12 family. PSII is composed of 1 copy each of membrane proteins PsbA, PsbB, PsbC, PsbD, PsbE, PsbF, PsbH, PsbI, PsbJ, PsbK, PsbL, PsbM, PsbT, PsbX, PsbY, PsbZ, Psb30/Ycf12, peripheral proteins of the oxygen-evolving complex and a large number of cofactors. It forms dimeric complexes.

Its subcellular location is the plastid. It is found in the cyanelle thylakoid membrane. A core subunit of photosystem II (PSII), probably helps stabilize the reaction center. In Cyanophora paradoxa, this protein is Photosystem II reaction center protein Psb30.